The primary structure comprises 1372 residues: DNA-directed RNA polymerase subunit beta' (1372 aa).

Zn(2+)-binding residues include Cys69, Cys71, Cys84, and Cys87. Positions 460, 462, and 464 each coordinate Mg(2+). Zn(2+) contacts are provided by Cys808, Cys882, Cys889, and Cys892.

Belongs to the RNA polymerase beta' chain family. As to quaternary structure, the RNAP catalytic core consists of 2 alpha, 1 beta, 1 beta' and 1 omega subunit. When a sigma factor is associated with the core the holoenzyme is formed, which can initiate transcription. Mg(2+) is required as a cofactor. Requires Zn(2+) as cofactor.

It catalyses the reaction RNA(n) + a ribonucleoside 5'-triphosphate = RNA(n+1) + diphosphate. Its function is as follows. DNA-dependent RNA polymerase catalyzes the transcription of DNA into RNA using the four ribonucleoside triphosphates as substrates. In Rickettsia prowazekii (strain Madrid E), this protein is DNA-directed RNA polymerase subunit beta'.